Reading from the N-terminus, the 185-residue chain is Transmembrane protein 140 (185 aa).

Over 1–11 the chain is Cytoplasmic; it reads MAGPRPRWRDQ. A helical membrane pass occupies residues 12 to 32; that stretch reads LLFMSIIVLVIVVICLMFYAL. Over 33–77 the chain is Extracellular; that stretch reads LWEAGNLTDLPNLRIGFYNFCLWNEDTSTLQCHQFPELEALGVPR. An N-linked (GlcNAc...) asparagine glycan is attached at Asn38. The helical transmembrane segment at 78-98 threads the bilayer; the sequence is VGLGLARLGVYGSLVLTLFAP. The Cytoplasmic portion of the chain corresponds to 99–114; that stretch reads QPLLLAQCNSDERAWR. A helical membrane pass occupies residues 115–135; the sequence is LAVGFLAVSSVLLAGGLGLFL. The Extracellular segment spans residues 136 to 150; it reads SYVWKWVRLSLPGPG. The helical transmembrane segment at 151 to 171 threads the bilayer; that stretch reads FLALGSAQALLILLLIAMAVF. Over 172-185 the chain is Cytoplasmic; that stretch reads PLRAERAESKLESC.

Expression significantly higher in gliomas than in normal brain tissues.

Its subcellular location is the membrane. In Homo sapiens (Human), this protein is Transmembrane protein 140 (TMEM140).